Here is a 149-residue protein sequence, read N- to C-terminus: L-alanine exporter AlaE (149 aa).

4 helical membrane passes run 16-36 (FAMV…LSGM), 46-66 (LVAI…RDAI), 85-105 (VLAY…TVGA), and 112-132 (AAVS…GYFL).

This sequence belongs to the AlaE exporter family.

The protein localises to the cell inner membrane. Its function is as follows. Exports L-alanine. In Citrobacter koseri (strain ATCC BAA-895 / CDC 4225-83 / SGSC4696), this protein is L-alanine exporter AlaE.